Consider the following 121-residue polypeptide: MAMNLLNTASIAKEMQTKVTERMGDWFEAEFKAKANSASRRTRLIRSHGHTYTYARYQNTGQLSSNLKQVKKGDKIVIDAGTRANYTSGYHGMYFLVEKKGMQEVKTTLKKGANYANSMKL.

Belongs to the Skunalikevirus tail terminator protein family. Homohexamer. Interacts with the tail tube protein.

The protein localises to the virion. Functionally, plays an essential role in tail assembly by capping the rapidly polymerizing tail once it has reached its requisite length and serving as the interaction surface for the connector and the tail tube proteins. The sequence is that of Probable tail terminator protein from Lactococcus lactis (Lactococcus lactis bacteriophage p2).